A 161-amino-acid chain; its full sequence is Allophycocyanin beta chain (161 aa).

Residue Asn-71 is modified to N4-methylasparagine. (2R,3E)-phycocyanobilin is bound at residue Cys-81.

It belongs to the phycobiliprotein family. In terms of assembly, heterodimer of an alpha and a beta chain. Contains one covalently linked phycocyanobilin chromophore.

The protein localises to the plastid. The protein resides in the chloroplast thylakoid membrane. Light-harvesting photosynthetic bile pigment-protein from the phycobiliprotein complex. Allophycocyanin has a maximum absorption at approximately 650 nanometers. The sequence is that of Allophycocyanin beta chain (apcB) from Porphyra purpurea (Red seaweed).